Here is a 308-residue protein sequence, read N- to C-terminus: Bifunctional protein FolD (308 aa).

An NADP(+)-binding site is contributed by 170-172; the sequence is GKG.

The protein belongs to the tetrahydrofolate dehydrogenase/cyclohydrolase family. Homodimer.

The catalysed reaction is (6R)-5,10-methylene-5,6,7,8-tetrahydrofolate + NADP(+) = (6R)-5,10-methenyltetrahydrofolate + NADPH. It catalyses the reaction (6R)-5,10-methenyltetrahydrofolate + H2O = (6R)-10-formyltetrahydrofolate + H(+). It participates in one-carbon metabolism; tetrahydrofolate interconversion. Catalyzes the oxidation of 5,10-methylenetetrahydrofolate to 5,10-methenyltetrahydrofolate and then the hydrolysis of 5,10-methenyltetrahydrofolate to 10-formyltetrahydrofolate. In Pyrobaculum calidifontis (strain DSM 21063 / JCM 11548 / VA1), this protein is Bifunctional protein FolD.